A 274-amino-acid chain; its full sequence is tRNA-cytidine(32) 2-sulfurtransferase (274 aa).

Residues 40-45 (SGGKDS) carry the PP-loop motif motif. Cys-115, Cys-118, and Cys-206 together coordinate [4Fe-4S] cluster.

This sequence belongs to the TtcA family. In terms of assembly, homodimer. It depends on Mg(2+) as a cofactor. [4Fe-4S] cluster is required as a cofactor.

The protein resides in the cytoplasm. The catalysed reaction is cytidine(32) in tRNA + S-sulfanyl-L-cysteinyl-[cysteine desulfurase] + AH2 + ATP = 2-thiocytidine(32) in tRNA + L-cysteinyl-[cysteine desulfurase] + A + AMP + diphosphate + H(+). It functions in the pathway tRNA modification. In terms of biological role, catalyzes the ATP-dependent 2-thiolation of cytidine in position 32 of tRNA, to form 2-thiocytidine (s(2)C32). The sulfur atoms are provided by the cysteine/cysteine desulfurase (IscS) system. The polypeptide is tRNA-cytidine(32) 2-sulfurtransferase (Ectopseudomonas mendocina (strain ymp) (Pseudomonas mendocina)).